A 708-amino-acid chain; its full sequence is Ubiquitin thioesterase ZRANB1 (708 aa).

The RanBP2-type 1 zinc-finger motif lies at 3-33; sequence ERGIKWACEYCTYENWPSAIKCTMCRAQRPS. Zn(2+)-binding residues include C10, C13, C24, and C27. The tract at residues 38–73 is disordered; it reads TEDPFKSGSSDVGRDWDPSSTEGGSSPLICPDSSAR. 2 RanBP2-type zinc fingers span residues 84–113 and 149–178; these read NANK…QRRT and RTQH…PRPN. Zn(2+)-binding residues include C90, C93, C104, C107, C155, C158, C169, and C172. A disordered region spans residues 200 to 223; the sequence is RARWRGSCSSGNSQRRSPPTMKRD. Residues 206-216 show a composition bias toward polar residues; the sequence is SCSSGNSQRRS. ANK repeat units lie at residues 260–290 and 313–340; these read KKTD…SGGD and YTLV…QQAA. One can recognise an OTU domain in the interval 432–592; sequence LYALWNRTAG…RGHFSALVAM (161 aa). Catalysis depends on C443, which acts as the Nucleophile. Residue H585 is the Proton acceptor of the active site.

This sequence belongs to the peptidase C64 family. As to quaternary structure, interacts with TRAF6. Interacts with APC.

Its subcellular location is the cytoplasm. The protein localises to the nucleus. It catalyses the reaction Thiol-dependent hydrolysis of ester, thioester, amide, peptide and isopeptide bonds formed by the C-terminal Gly of ubiquitin (a 76-residue protein attached to proteins as an intracellular targeting signal).. Ubiquitin thioesterase, which specifically hydrolyzes 'Lys-29'-linked and 'Lys-33'-linked diubiquitin. Also cleaves 'Lys-63'-linked chains, but with 40-fold less efficiency compared to 'Lys-29'-linked ones. Positive regulator of the Wnt signaling pathway that deubiquitinates APC protein, a negative regulator of Wnt-mediated transcription. Acts as a regulator of autophagy by mediating deubiquitination of PIK3C3/VPS34, thereby promoting autophagosome maturation. Plays a role in the regulation of cell morphology and cytoskeletal organization. Required in the stress fiber dynamics and cell migration. This chain is Ubiquitin thioesterase ZRANB1, found in Bos taurus (Bovine).